We begin with the raw amino-acid sequence, 378 residues long: WUSCHEL-related homeobox 9 (378 aa).

2 disordered regions span residues 1-60 (MASS…NPKP) and 123-173 (KHSL…GSQM). Over residues 32-42 (SASHRSSPFSS) the composition is skewed to low complexity. Residues 45–54 (EVERSPEPKP) show a composition bias toward basic and acidic residues. Positions 51–115 (EPKPRWNPKP…NRKSRSKHKL (65 aa)) form a DNA-binding region, homeobox; WUS-type. 2 stretches are compositionally biased toward low complexity: residues 137–152 (PSAS…SSKS) and 161–171 (KNNTNLSLGGS).

Belongs to the WUS homeobox family. Expressed in the basal cell and later at the boundary between suspensor and proembryo. Expressed at low levels in proliferating tissues post embryonically. Detected in vegetative shoot apical meristem, leaf primordia, floral meristems, emerging floral organs, epidermal layer of the placenta and in the upper portion of the root meristematic zone.

It is found in the nucleus. The protein localises to the cytoplasm. Its function is as follows. Homeodomain transcription factor required for meristem growth and early development. Promotes cell proliferation and prevents premature differentiation in meristematic tissues during postembryonic development. Essential for maintaining tissue growth during embryogenesis. May act by repressing TSS to promote meristematic proliferation. Involved in the transcriptional activation of a subset of cytokinin response factors. May act as a negative regulator of cytokinin signaling in the dark. The chain is WUSCHEL-related homeobox 9 from Arabidopsis thaliana (Mouse-ear cress).